The primary structure comprises 341 residues: tRNA N6-adenosine threonylcarbamoyltransferase (341 aa).

Positions 114 and 118 each coordinate Fe cation. Substrate is bound by residues 136-140 (LVSGG), D169, G182, D186, and N278. A Fe cation-binding site is contributed by D304.

Belongs to the KAE1 / TsaD family. Requires Fe(2+) as cofactor.

The protein localises to the cytoplasm. The catalysed reaction is L-threonylcarbamoyladenylate + adenosine(37) in tRNA = N(6)-L-threonylcarbamoyladenosine(37) in tRNA + AMP + H(+). In terms of biological role, required for the formation of a threonylcarbamoyl group on adenosine at position 37 (t(6)A37) in tRNAs that read codons beginning with adenine. Is involved in the transfer of the threonylcarbamoyl moiety of threonylcarbamoyl-AMP (TC-AMP) to the N6 group of A37, together with TsaE and TsaB. TsaD likely plays a direct catalytic role in this reaction. The sequence is that of tRNA N6-adenosine threonylcarbamoyltransferase from Lactococcus lactis subsp. cremoris (strain MG1363).